A 291-amino-acid chain; its full sequence is MYRGSMVALVTPMKADGSLDWDALHKLIDWHLEQGTHAIVAVGTTGESATLNMAEHLEVISKVVDQVNGRVPVIAGTGANSTSEALELTQGAKQAKADACLLVTPYYNKPSQEGLYQHYCYLAREVAIPQFLYNVPGRTAVDMLPETVARLATVENIVGIKDATASMERLQQMQALTDDSFIFLSGDDATSVDFMALGGHGEISVTANVVPAQTAKICELALAGNVEQARELDRPLAPLHEALFLEANPVPVKWAMARMGFLDGALRLPLTPLNAVYHAQLEAAMLSAGAI.

Threonine 45 serves as a coordination point for pyruvate. Catalysis depends on tyrosine 133, which acts as the Proton donor/acceptor. Residue lysine 161 is the Schiff-base intermediate with substrate of the active site. Isoleucine 203 contributes to the pyruvate binding site.

The protein belongs to the DapA family. Homotetramer; dimer of dimers.

It is found in the cytoplasm. It carries out the reaction L-aspartate 4-semialdehyde + pyruvate = (2S,4S)-4-hydroxy-2,3,4,5-tetrahydrodipicolinate + H2O + H(+). Its pathway is amino-acid biosynthesis; L-lysine biosynthesis via DAP pathway; (S)-tetrahydrodipicolinate from L-aspartate: step 3/4. Its function is as follows. Catalyzes the condensation of (S)-aspartate-beta-semialdehyde [(S)-ASA] and pyruvate to 4-hydroxy-tetrahydrodipicolinate (HTPA). This Teredinibacter turnerae (strain ATCC 39867 / T7901) protein is 4-hydroxy-tetrahydrodipicolinate synthase.